Consider the following 235-residue polypeptide: CMP-N,N'-diacetyllegionaminic acid synthase (235 aa).

This sequence belongs to the CMP-NeuNAc synthase family.

It carries out the reaction N,N-diacetyllegionaminate + CTP = CMP-N,N-diacetyllegionaminate + diphosphate. Functionally, involved in biosynthesis of legionaminic acid (5,7-diamino-3,5,7,9-tetradeoxy-D-glycero-D-galacto-non-2-ulosonic acid)(Leg), a sialic acid-like derivative that is incorporated into flagellin via O-linkage to Ser/Thr. Catalyzes the conversion of N,N'-diacetyllegionaminic acid (Leg5Ac7Ac) and CTP into CMP-N,N'-diacetyllegionaminic acid (CMP-Leg5Ac7Ac). This is CMP-N,N'-diacetyllegionaminic acid synthase (legF) from Campylobacter jejuni subsp. jejuni serotype O:2 (strain ATCC 700819 / NCTC 11168).